A 582-amino-acid polypeptide reads, in one-letter code: TRAF-type zinc finger domain-containing protein 1 (582 aa).

A2 is subject to N-acetylalanine. A TRAF-type zinc finger spans residues 27 to 103; it reads IHEIHCQRNI…DLELSILKLK (77 aa). The residue at position 191 (S191) is a Phosphoserine. A disordered region spans residues 216–238; it reads EEQERQERNRGQQPPKEGGEDGA. Phosphoserine is present on residues S278, S320, S326, S327, S409, S415, S430, and S470. Disordered stretches follow at residues 402–509 and 522–582; these read EGIP…IAPG and PENI…EEEE. Composition is skewed to polar residues over residues 454–471 and 486–504; these read PFNN…STSG and LNNS…SQNG.

In terms of assembly, interacts with MAVS, TICAM1, TRAF1, TRAF2, TRAF3 and TRAF6.

Functionally, negative feedback regulator that controls excessive innate immune responses. Regulates both Toll-like receptor 4 (TLR4) and DDX58/RIG1-like helicases (RLH) pathways. May inhibit the LTR pathway by direct interaction with TRAF6 and attenuation of NF-kappa-B activation. May negatively regulate the RLH pathway downstream from MAVS and upstream of NF-kappa-B and IRF3. This chain is TRAF-type zinc finger domain-containing protein 1 (TRAFD1), found in Macaca fascicularis (Crab-eating macaque).